Reading from the N-terminus, the 433-residue chain is Sensor protein RstB (433 aa).

The Cytoplasmic segment spans residues 1-3 (MKK). The helical transmembrane segment at 4–24 (LFIQFYLLLFVCFLVMSLLVG) threads the bilayer. The Periplasmic portion of the chain corresponds to 25–135 (LVYKFTAERA…PYLYYLHQMR (111 aa)). A helical membrane pass occupies residues 136–156 (LLDIALIAFIAISLAFPVFIW). The Cytoplasmic portion of the chain corresponds to 157 to 433 (MRPHWQDMLK…WHNIPQFTSA (277 aa)). One can recognise an HAMP domain in the interval 158–210 (RPHWQDMLKLEAAAQRFGDGHLNERIHFDEGSSFERLGVAFNQMADNINALIA). A Histidine kinase domain is found at 218–425 (GIAHELRTPL…RFSFSWPLWH (208 aa)). Phosphohistidine; by autocatalysis is present on His-276.

In terms of processing, autophosphorylated.

It localises to the cell inner membrane. It carries out the reaction ATP + protein L-histidine = ADP + protein N-phospho-L-histidine.. Member of the two-component regulatory system RstB/RstA. RstB functions as a membrane-associated protein kinase that phosphorylates RstA. This is Sensor protein RstB (rstB) from Escherichia coli (strain K12).